A 284-amino-acid chain; its full sequence is Tropomyosin (284 aa).

Methionine 1 carries the N-acetylmethionine modification. Disordered stretches follow at residues 1-49 (MDAI…NQKK) and 103-126 (EERL…SERM). Positions 1–284 (MDAIKKKMQA…DQAFSELSGF (284 aa)) form a coiled coil. Basic and acidic residues predominate over residues 12-45 (KLEKDNAMDKADTLEQQNKEANLRAEKTEEEIRA).

It belongs to the tropomyosin family. Homodimer. As to expression, expressed in leg muscle and chest protection muscle (at protein level).

Its function is as follows. Tropomyosin, in association with the troponin complex, plays a central role in the calcium dependent regulation of muscle contraction. The sequence is that of Tropomyosin from Chionoecetes opilio (Atlantic snow crab).